The following is a 610-amino-acid chain: UvrABC system protein C (610 aa).

The 79-residue stretch at 16 to 94 (SQPGVYRMYD…IKLYQPRYNV (79 aa)) folds into the GIY-YIG domain. Residues 204–239 (DQVLTQLIARMEKASQSLEFEEAARIRDQIQAVRRV) form the UVR domain. The interval 540-559 (HAISGHRKKRAKVKSTSSLE) is disordered. Basic residues predominate over residues 543–552 (SGHRKKRAKV).

This sequence belongs to the UvrC family. As to quaternary structure, interacts with UvrB in an incision complex.

It localises to the cytoplasm. The UvrABC repair system catalyzes the recognition and processing of DNA lesions. UvrC both incises the 5' and 3' sides of the lesion. The N-terminal half is responsible for the 3' incision and the C-terminal half is responsible for the 5' incision. The protein is UvrABC system protein C of Klebsiella pneumoniae (strain 342).